The primary structure comprises 83 residues: Cytotoxin homolog 5 (83 aa).

The N-terminal stretch at 1-21 (MKTLLLTMVVVTIVCLDLGYT) is a signal peptide. Cystine bridges form between C24–C43, C36–C61, C65–C76, and C77–C82.

The protein belongs to the three-finger toxin family. Short-chain subfamily. Orphan group XV sub-subfamily. As to expression, expressed by the venom gland.

The protein localises to the secreted. The protein resides in the target cell membrane. In terms of biological role, has low cytotoxic activity. This Naja atra (Chinese cobra) protein is Cytotoxin homolog 5.